Consider the following 92-residue polypeptide: Large ribosomal subunit protein bL27 (92 aa).

A propeptide spanning residues 1-9 (MLVMNLQYF) is cleaved from the precursor.

The protein belongs to the bacterial ribosomal protein bL27 family. The N-terminus is cleaved by ribosomal processing cysteine protease Prp.

This is Large ribosomal subunit protein bL27 from Heliobacterium modesticaldum (strain ATCC 51547 / Ice1).